Consider the following 202-residue polypeptide: LexA repressor (202 aa).

The segment at residues 32–52 is a DNA-binding region (H-T-H motif); the sequence is RAEVCSAFGFKSPNAAETHLR. Active-site for autocatalytic cleavage activity residues include S121 and K158.

Belongs to the peptidase S24 family. Homodimer.

It carries out the reaction Hydrolysis of Ala-|-Gly bond in repressor LexA.. Represses a number of genes involved in the response to DNA damage (SOS response), including recA and lexA. In the presence of single-stranded DNA, RecA interacts with LexA causing an autocatalytic cleavage which disrupts the DNA-binding part of LexA, leading to derepression of the SOS regulon and eventually DNA repair. The polypeptide is LexA repressor (Azoarcus sp. (strain BH72)).